The sequence spans 491 residues: Limb region 1 homolog-like protein (491 aa).

Residues 1 to 20 are Extracellular-facing; sequence METEDVTVREQIFHDRVRET. A helical transmembrane segment spans residues 21–41; sequence IICVLLFICLYILSHFILTHF. Residues 42-59 are Cytoplasmic-facing; it reads KKSAEFVTDDIEDATVNK. The chain crosses the membrane as a helical span at residues 60–80; that stretch reads IALWLCTFTLSVAVCAVLLLP. Over 81-111 the chain is Extracellular; the sequence is ISILSNEVLLTFPHSYYMQWLNGSLIRGLWN. The helical transmembrane segment at 112–132 threads the bilayer; the sequence is LVFLFSNLSLVFLMPFAYFFT. Residues 133 to 152 lie on the Cytoplasmic side of the membrane; sequence ESEGFAGSKKGVMARVYETA. The helical transmembrane segment at 153–173 threads the bilayer; that stretch reads VMLLLLSLLVLGIVWVASALL. The Extracellular segment spans residues 174–192; that stretch reads HHNTARESLYDLWEYYLPY. The helical transmembrane segment at 193 to 213 threads the bilayer; sequence LYSGISLFGVLLLLLCTPFGL. The Cytoplasmic portion of the chain corresponds to 214-292; the sequence is SRMFSVTGSL…RKRASPWQRN (79 aa). Residues 293–313 traverse the membrane as a helical segment; it reads LVYPVAMLLLLALTAVSVLMV. The Extracellular segment spans residues 314 to 346; that stretch reads CFHVLELLFDESAMPRGMEDPHLGLASFSMLGS. The chain crosses the membrane as a helical span at residues 347 to 367; the sequence is LGAAVQVVIILYLMVSSVVGF. Topologically, residues 368–384 are cytoplasmic; that stretch reads YSSPLFTGLLPRAQDTT. A helical transmembrane segment spans residues 385-405; it reads LTQIIGNCVSLLILSSALPVF. Residues 406-427 are Extracellular-facing; that stretch reads SRTLGITKFDLLGDFGRHDWLG. A helical membrane pass occupies residues 428–448; sequence SFHIVFLYNMLFAGLTSACLI. Residues 449–491 are Cytoplasmic-facing; that stretch reads NTVTWALQRELIRAFGLHRLPLTVSRSTIPLKLLLANGLSKIH.

The protein belongs to the LIMR family. As to quaternary structure, dimer. Can also form higher oligomers.

It is found in the cell membrane. The protein resides in the endoplasmic reticulum membrane. Functionally, may play a role in lymphocyte development by negatively regulating the canonical Wnt signaling pathway. May act as a LCN1 receptor. The chain is Limb region 1 homolog-like protein (lmbr1l) from Danio rerio (Zebrafish).